A 312-amino-acid chain; its full sequence is Ribosomal RNA small subunit methyltransferase H (312 aa).

S-adenosyl-L-methionine is bound by residues 32–34 (AGH), aspartate 52, phenylalanine 79, aspartate 100, and glutamine 107.

This sequence belongs to the methyltransferase superfamily. RsmH family.

It localises to the cytoplasm. The catalysed reaction is cytidine(1402) in 16S rRNA + S-adenosyl-L-methionine = N(4)-methylcytidine(1402) in 16S rRNA + S-adenosyl-L-homocysteine + H(+). Functionally, specifically methylates the N4 position of cytidine in position 1402 (C1402) of 16S rRNA. This chain is Ribosomal RNA small subunit methyltransferase H, found in Listeria monocytogenes serotype 4b (strain F2365).